Reading from the N-terminus, the 84-residue chain is Tripartite terminase subunit 2 (84 aa).

This sequence belongs to the herpesviridae TRM2 protein family. Associates with TRM1 and TRM3 to form the tripartite terminase complex.

The protein resides in the host nucleus. Component of the molecular motor that translocates viral genomic DNA in empty capsid during DNA packaging. Forms a tripartite terminase complex together with TRM1 and TRM3 in the host cytoplasm. Once the complex reaches the host nucleus, it interacts with the capsid portal vertex. This portal forms a ring in which genomic DNA is translocated into the capsid. This chain is Tripartite terminase subunit 2, found in Alcelaphine herpesvirus 1 (strain C500) (AlHV-1).